Here is a 138-residue protein sequence, read N- to C-terminus: Basic phospholipase A2 homolog promutoxin (138 aa).

The signal sequence occupies residues 1–16 (MRTLWIMAVLLLGVEG). Intrachain disulfides connect C42/C132, C44/C60, C59/C112, C65/C138, C66/C105, C73/C98, and C91/C103. The tract at residues 122-133 (KKHRVTMKFLCK) is important for membrane-damaging activities in eukaryotes and bacteria; heparin-binding.

The protein belongs to the phospholipase A2 family. Group II subfamily. R49 sub-subfamily. In terms of assembly, homodimer; non-covalently linked. Expressed by the venom gland.

The protein localises to the secreted. Snake venom phospholipase A2 homolog that lacks enzymatic activity. Exhibits potent myotoxicity causing myonecrosis and edema in the gastrocnemius muscle of mice. Is also able to stimulate the release of IL12 (IL12A-IL12B), TNF-alpha (TNF), IL6 and IL1-beta (IL1B) from human monocytes, and induce IL2, TNFalpha and IL6 release from T-cells. A model of myotoxic mechanism has been proposed: an apo Lys49-PLA2 is activated by the entrance of a hydrophobic molecule (e.g. fatty acid) at the hydrophobic channel of the protein leading to a reorientation of a monomer. This reorientation causes a transition between 'inactive' to 'active' states, causing alignment of C-terminal and membrane-docking sites (MDoS) side-by-side and putting the membrane-disruption sites (MDiS) in the same plane, exposed to solvent and in a symmetric position for both monomers. The MDoS region stabilizes the toxin on membrane by the interaction of charged residues with phospholipid head groups. Subsequently, the MDiS region destabilizes the membrane with penetration of hydrophobic residues. This insertion causes a disorganization of the membrane, allowing an uncontrolled influx of ions (i.e. calcium and sodium), and eventually triggering irreversible intracellular alterations and cell death. The chain is Basic phospholipase A2 homolog promutoxin from Protobothrops mucrosquamatus (Taiwan habu).